Consider the following 449-residue polypeptide: Xylose isomerase (449 aa).

Active-site residues include His103 and Asp106. The Mg(2+) site is built by Glu234, Glu270, His273, Asp298, Asp309, Asp311, and Asp342.

Belongs to the xylose isomerase family. As to quaternary structure, homotetramer. The cofactor is Mg(2+).

It is found in the cytoplasm. It catalyses the reaction alpha-D-xylose = alpha-D-xylulofuranose. The protein is Xylose isomerase of Levilactobacillus brevis (strain ATCC 367 / BCRC 12310 / CIP 105137 / JCM 1170 / LMG 11437 / NCIMB 947 / NCTC 947) (Lactobacillus brevis).